The sequence spans 480 residues: Gasdermin-C4 (480 aa).

Positions 1–226 (MGYSFDRASK…TCVILPSATK (226 aa)) are triggers pyroptosis.

The protein belongs to the gasdermin family. As to quaternary structure, homooligomer; homooligomeric ring-shaped pore complex containing 27-28 subunits when inserted in the membrane. Post-translationally, cleavage by CASP8 relieves autoinhibition by releasing the N-terminal moiety (Gasdermin-C4, N-terminal) that initiates pyroptosis. In terms of processing, palmitoylated.

Its subcellular location is the cytoplasm. It is found in the cytosol. The protein localises to the cell membrane. Its activity is regulated as follows. The full-length protein before cleavage is inactive: intramolecular interactions between N- and C-terminal domains mediate autoinhibition in the absence of activation signal. The intrinsic pyroptosis-inducing activity is carried by the released N-terminal moiety (Gasdermin-C4, N-terminal) following cleavage by caspase CASP8. In terms of biological role, this form constitutes the precursor of the pore-forming protein: upon cleavage, the released N-terminal moiety (Gasdermin-C4, N-terminal) binds to membranes and forms pores, triggering pyroptosis. Pore-forming protein that causes membrane permeabilization and pyroptosis. Produced by the cleavage of gasdermin-C4 by caspase CASP8 in response to death signals. After cleavage, moves to the plasma membrane where it strongly binds to membrane inner leaflet lipids. Homooligomerizes within the membrane and forms pores of 10-15 nanometers (nm) of inner diameter, triggering pyroptosis. The sequence is that of Gasdermin-C4 from Mus musculus (Mouse).